Reading from the N-terminus, the 318-residue chain is Methionyl-tRNA formyltransferase (318 aa).

A (6S)-5,6,7,8-tetrahydrofolate-binding site is contributed by 112–115 (SILP).

This sequence belongs to the Fmt family.

It carries out the reaction L-methionyl-tRNA(fMet) + (6R)-10-formyltetrahydrofolate = N-formyl-L-methionyl-tRNA(fMet) + (6S)-5,6,7,8-tetrahydrofolate + H(+). Attaches a formyl group to the free amino group of methionyl-tRNA(fMet). The formyl group appears to play a dual role in the initiator identity of N-formylmethionyl-tRNA by promoting its recognition by IF2 and preventing the misappropriation of this tRNA by the elongation apparatus. This Shewanella baltica (strain OS155 / ATCC BAA-1091) protein is Methionyl-tRNA formyltransferase.